Here is a 538-residue protein sequence, read N- to C-terminus: Calcyphosin-2 (538 aa).

Polar residues predominate over residues 134-146; sequence RNAENTKSNVTHK. A disordered region spans residues 134–154; the sequence is RNAENTKSNVTHKQSPRNKID. EF-hand domains are found at residues 426–461, 462–497, and 498–533; these read RILT…FHLE, VSEK…EMNE, and YRKS…KKHS. Ca(2+) is bound by residues Asp-439, Asn-443, Asp-450, Asn-477, Asn-479, Lys-481, Glu-486, Asp-511, Asn-513, Ser-515, Ser-517, and Asn-522.

As to expression, abundantly expressed in many tissues. Expressed in brain, colon, heart, kidney, liver, lung, liver, pancreas, placenta, skeletal muscle, testis and thymus. Highest expression in colon, testis, lung, placenta and brain.

This chain is Calcyphosin-2, found in Homo sapiens (Human).